We begin with the raw amino-acid sequence, 445 residues long: Argininosuccinate synthase (445 aa).

ATP is bound by residues 17–25 and A43; that span reads AFSGGLDTS. Y99 provides a ligand contact to L-citrulline. The ATP site is built by G129 and T131. The L-aspartate site is built by T131, N135, and D136. N135 serves as a coordination point for L-citrulline. Position 136 (D136) interacts with ATP. 2 residues coordinate L-citrulline: R139 and S192. D194 is a binding site for ATP. Residues T201, E203, and E280 each coordinate L-citrulline.

It belongs to the argininosuccinate synthase family. Type 2 subfamily. Homotetramer.

Its subcellular location is the cytoplasm. The enzyme catalyses L-citrulline + L-aspartate + ATP = 2-(N(omega)-L-arginino)succinate + AMP + diphosphate + H(+). The protein operates within amino-acid biosynthesis; L-arginine biosynthesis; L-arginine from L-ornithine and carbamoyl phosphate: step 2/3. The polypeptide is Argininosuccinate synthase (argG) (Bradyrhizobium diazoefficiens (strain JCM 10833 / BCRC 13528 / IAM 13628 / NBRC 14792 / USDA 110)).